A 130-amino-acid chain; its full sequence is Small ribosomal subunit protein uS9 (130 aa).

It belongs to the universal ribosomal protein uS9 family.

This chain is Small ribosomal subunit protein uS9, found in Halorhodospira halophila (strain DSM 244 / SL1) (Ectothiorhodospira halophila (strain DSM 244 / SL1)).